The primary structure comprises 383 residues: ATP phosphoribosyltransferase regulatory subunit (383 aa).

The protein belongs to the class-II aminoacyl-tRNA synthetase family. HisZ subfamily. In terms of assembly, heteromultimer composed of HisG and HisZ subunits.

The protein localises to the cytoplasm. It participates in amino-acid biosynthesis; L-histidine biosynthesis; L-histidine from 5-phospho-alpha-D-ribose 1-diphosphate: step 1/9. Its function is as follows. Required for the first step of histidine biosynthesis. May allow the feedback regulation of ATP phosphoribosyltransferase activity by histidine. This Janthinobacterium sp. (strain Marseille) (Minibacterium massiliensis) protein is ATP phosphoribosyltransferase regulatory subunit.